A 776-amino-acid chain; its full sequence is Genome polyprotein (776 aa).

Positions 1–27 are disordered; sequence MAGKAVLKGKGGGPPRRASKVAPKKTR. The Cytoplasmic portion of the chain corresponds to 1-98; the sequence is MAGKAVLKGK…LHRRGSRRTT (98 aa). Residues 17 to 27 show a composition bias toward basic residues; sequence RASKVAPKKTR. A hydrophobic; homodimerization of capsid protein C region spans residues 33–68; sequence MPNGLVLMRMLGVLWHALTGTARSPVLKAFWKVVPL. Residues 97–117 constitute a propeptide, ER anchor for the protein C, removed in mature form by serine protease NS3; the sequence is TTIDWMTPLLITVMLGMCLTA. Residues 99–117 form a helical membrane-spanning segment; it reads IDWMTPLLITVMLGMCLTA. Residues 118–242 lie on the Extracellular side of the membrane; that stretch reads TVRRERDGSM…HLTRVEGWVW (125 aa). N-linked (GlcNAc...) asparagine; by host glycosylation is present at Asn144. A helical membrane pass occupies residues 243-260; sequence KNKLFTLSLVMVAWLMVD. A topological domain (cytoplasmic) is located at residue Gly261. Residues 262–280 form a helical membrane-spanning segment; it reads LLPRILIVVVALALVPAYA. Over 281–727 the chain is Extracellular; it reads SRCTHLENRD…HTVLGGAFNT (447 aa). Disulfide bonds link Cys283–Cys310, Cys340–Cys396, Cys354–Cys385, and Cys372–Cys401. The N-linked (GlcNAc...) asparagine; by host glycan is linked to Asn434. 2 disulfide bridges follow: Cys466–Cys570 and Cys587–Cys618. The segment at residues 728 to 748 is an intramembrane region (helical); the sequence is LLGGVGFLPKILLGVAMAWLG. Residues 749-755 lie on the Extracellular side of the membrane; it reads LNMRNPT. Positions 756-776 form an intramembrane region, helical; the sequence is LSMGFLLSGGLVLAMTLGVGA.

Post-translationally, specific enzymatic cleavages in vivo yield mature proteins Peptide 2K acts as a signal sequence and is removed from the N-terminus of NS4B by the host signal peptidase in the ER lumen. Signal cleavage at the 2K-4B site requires a prior NS3 protease-mediated cleavage at the 4A-2K site.

The protein resides in the virion. It localises to the secreted. The protein localises to the virion membrane. It is found in the host endoplasmic reticulum membrane. Functionally, capsid protein C self-assembles to form an icosahedral capsid about 30 nm in diameter. The capsid encapsulates the genomic RNA. PrM acts as a chaperone for envelope protein E during intracellular virion assembly by masking and inactivating envelope protein E fusion peptide. prM is matured in the last step of virion assembly, presumably to avoid catastrophic activation of the viral fusion peptide induced by the acidic pH of the trans-Golgi network. After cleavage by host furin, the pr peptide is released in the extracellular medium and small envelope protein M and envelope protein E homodimers are dissociated. Its function is as follows. Envelope protein E binding to host cell surface receptor is followed by virus internalization through clathrin-mediated endocytosis. Envelope protein E is subsequently involved in membrane fusion between virion and host late endosomes. Synthesized as a homodimer with prM which acts as a chaperone for envelope protein E. After cleavage of prM, envelope protein E dissociate from small envelope protein M and homodimerizes. This Homo sapiens (Human) protein is Genome polyprotein.